Consider the following 209-residue polypeptide: Protein-L-isoaspartate O-methyltransferase (209 aa).

Ser55 is an active-site residue.

The protein belongs to the methyltransferase superfamily. L-isoaspartyl/D-aspartyl protein methyltransferase family.

It localises to the cytoplasm. The catalysed reaction is [protein]-L-isoaspartate + S-adenosyl-L-methionine = [protein]-L-isoaspartate alpha-methyl ester + S-adenosyl-L-homocysteine. In terms of biological role, catalyzes the methyl esterification of L-isoaspartyl residues in peptides and proteins that result from spontaneous decomposition of normal L-aspartyl and L-asparaginyl residues. It plays a role in the repair and/or degradation of damaged proteins. The chain is Protein-L-isoaspartate O-methyltransferase from Anaeromyxobacter dehalogenans (strain 2CP-C).